The sequence spans 294 residues: MLRVLHTIEDVREQTREWRAAGSSIGCVMTMGALHEGHLSLVDAARRECDKVVLTLFVNPIQFGPSEDFDRYPRTEEADFRALRDRECDAVFAPATETIFPLGERRIDQVRTKVVVRGLTDVLCGPRRPGHFDGVTTEVLKMLHIVDCDRTYWGEKDYQQYAVIRAMVEDQGLPVKVVPCPTMRDVDGLALSSRNTYLDSGQRAIAPRLYAALRRGARRIAEQGIDVIGETTKQIAETLLAHGFDLVEYVEVYTGSLGPAVAGTPVEELRVFGAVRLGGARLLDNAAVADEVGG.

31 to 38 (MGALHEGH) lines the ATP pocket. Residue His-38 is the Proton donor of the active site. A (R)-pantoate-binding site is contributed by Gln-62. A beta-alanine-binding site is contributed by Gln-62. Residue 154–157 (GEKD) participates in ATP binding. Gln-160 lines the (R)-pantoate pocket. ATP is bound at residue 191–194 (LSSR).

Belongs to the pantothenate synthetase family. Homodimer.

Its subcellular location is the cytoplasm. The catalysed reaction is (R)-pantoate + beta-alanine + ATP = (R)-pantothenate + AMP + diphosphate + H(+). It functions in the pathway cofactor biosynthesis; (R)-pantothenate biosynthesis; (R)-pantothenate from (R)-pantoate and beta-alanine: step 1/1. Functionally, catalyzes the condensation of pantoate with beta-alanine in an ATP-dependent reaction via a pantoyl-adenylate intermediate. The sequence is that of Pantothenate synthetase 3 from Frankia alni (strain DSM 45986 / CECT 9034 / ACN14a).